The primary structure comprises 349 residues: GATA zinc finger domain-containing protein 24 (349 aa).

Low complexity-rich tracts occupy residues 95–169 and 177–195; these read NINR…VNKN and NKSC…NNNS. Disordered stretches follow at residues 95–227 and 250–294; these read NINR…PVIK and DYDY…KPVQ. The segment covering 196-212 has biased composition (basic and acidic residues); sequence ENKEKNNINNNNEKENN. Over residues 257 to 272 the composition is skewed to low complexity; that stretch reads SNESSSPTLSASTLSS. The segment covering 278 to 289 has biased composition (basic residues); sequence KVLKRGRGRPSK. The GATA-type zinc-finger motif lies at 295-323; that stretch reads CFSCFRSNTPEWRKGKDKDGNVIDLCNAC.

The polypeptide is GATA zinc finger domain-containing protein 24 (gtaX) (Dictyostelium discoideum (Social amoeba)).